The sequence spans 370 residues: Glutamate 5-kinase (370 aa).

Lysine 17 contacts ATP. Substrate contacts are provided by serine 56, aspartate 143, and asparagine 155. 175-176 (SD) is a binding site for ATP. The PUA domain occupies 280-357 (RGTIRVDAGA…AEIVAILGYS (78 aa)).

The protein belongs to the glutamate 5-kinase family.

Its subcellular location is the cytoplasm. The enzyme catalyses L-glutamate + ATP = L-glutamyl 5-phosphate + ADP. The protein operates within amino-acid biosynthesis; L-proline biosynthesis; L-glutamate 5-semialdehyde from L-glutamate: step 1/2. Catalyzes the transfer of a phosphate group to glutamate to form L-glutamate 5-phosphate. The sequence is that of Glutamate 5-kinase from Cereibacter sphaeroides (strain ATCC 17023 / DSM 158 / JCM 6121 / CCUG 31486 / LMG 2827 / NBRC 12203 / NCIMB 8253 / ATH 2.4.1.) (Rhodobacter sphaeroides).